A 56-amino-acid polypeptide reads, in one-letter code: Lantibiotic subtilin (56 aa).

Positions 1-24 (MSKFDDFDLDVVKVSKQDSKITPQ) are excised as a propeptide. Position 25 is an N2-succinyltryptophan; partial (Trp25). The lanthionine (Ser-Cys) cross-link spans 27-31 (SESLC). Residue Ser29 is modified to 2,3-didehydroalanine (Ser). 4 consecutive cross-links (beta-methyllanthionine (Thr-Cys)) follow at residues 32-35 (TPGC), 37-43 (TGALQTC), 47-50 (TLTC), and 49-52 (TCNC). Thr42 bears the (Z)-2,3-didehydrobutyrine mark. The residue at position 55 (Ser55) is a 2,3-didehydroalanine (Ser).

It belongs to the type A lantibiotic family. Post-translationally, maturation of lantibiotics involves the enzymatic conversion of Thr, and Ser into dehydrated AA and the formation of thioether bonds with cysteine. This is followed by membrane translocation and cleavage of the modified precursor. In terms of processing, succinylated subtilin is 10-20 times less active than subtilin. The ratio subtilin/succinylated subtilin is about 1:2 after 24 hours growth. The 2,3-didehydrobutyrine is determined to be the Z-isomer.

Its function is as follows. Lanthionine-containing peptide antibiotic (lantibiotic) active on Gram-positive bacteria. The bactericidal activity of lantibiotics is based on depolarization of energized bacterial cytoplasmic membranes, initiated by the formation of aqueous transmembrane pores. The protein is Lantibiotic subtilin (spaS) of Bacillus subtilis.